The primary structure comprises 250 residues: tRNA (guanine-N(1)-)-methyltransferase (250 aa).

S-adenosyl-L-methionine-binding positions include Gly-108 and 127 to 132 (LGDFVL).

The protein belongs to the RNA methyltransferase TrmD family. As to quaternary structure, homodimer.

The protein resides in the cytoplasm. The catalysed reaction is guanosine(37) in tRNA + S-adenosyl-L-methionine = N(1)-methylguanosine(37) in tRNA + S-adenosyl-L-homocysteine + H(+). Specifically methylates guanosine-37 in various tRNAs. This chain is tRNA (guanine-N(1)-)-methyltransferase, found in Streptococcus agalactiae serotype Ia (strain ATCC 27591 / A909 / CDC SS700).